The following is a 470-amino-acid chain: ATP synthase subunit beta (470 aa).

155–162 contacts ATP; it reads GGAGVGKT.

This sequence belongs to the ATPase alpha/beta chains family. As to quaternary structure, F-type ATPases have 2 components, CF(1) - the catalytic core - and CF(0) - the membrane proton channel. CF(1) has five subunits: alpha(3), beta(3), gamma(1), delta(1), epsilon(1). CF(0) has three main subunits: a(1), b(2) and c(9-12). The alpha and beta chains form an alternating ring which encloses part of the gamma chain. CF(1) is attached to CF(0) by a central stalk formed by the gamma and epsilon chains, while a peripheral stalk is formed by the delta and b chains.

It localises to the cell membrane. The catalysed reaction is ATP + H2O + 4 H(+)(in) = ADP + phosphate + 5 H(+)(out). Functionally, produces ATP from ADP in the presence of a proton gradient across the membrane. The catalytic sites are hosted primarily by the beta subunits. This chain is ATP synthase subunit beta, found in Pectinatus frisingensis.